The following is a 97-amino-acid chain: UPF0147 protein MA_0092 (97 aa).

This sequence belongs to the UPF0147 family.

The chain is UPF0147 protein MA_0092 from Methanosarcina acetivorans (strain ATCC 35395 / DSM 2834 / JCM 12185 / C2A).